The following is a 417-amino-acid chain: 3-isopropylmalate dehydratase large subunit 2 (417 aa).

[4Fe-4S] cluster is bound by residues C298, C358, and C361.

The protein belongs to the aconitase/IPM isomerase family. LeuC type 2 subfamily. In terms of assembly, heterodimer of LeuC and LeuD. It depends on [4Fe-4S] cluster as a cofactor.

The enzyme catalyses (2R,3S)-3-isopropylmalate = (2S)-2-isopropylmalate. It participates in amino-acid biosynthesis; L-leucine biosynthesis; L-leucine from 3-methyl-2-oxobutanoate: step 2/4. Functionally, catalyzes the isomerization between 2-isopropylmalate and 3-isopropylmalate, via the formation of 2-isopropylmaleate. The protein is 3-isopropylmalate dehydratase large subunit 2 of Thermotoga maritima (strain ATCC 43589 / DSM 3109 / JCM 10099 / NBRC 100826 / MSB8).